Reading from the N-terminus, the 484-residue chain is tRNA sulfurtransferase (484 aa).

The THUMP domain occupies 61-165; sequence PLILDLLKRT…GDKMLLVEAR (105 aa). ATP-binding positions include 183–184, lysine 265, glycine 287, and glutamine 296; that span reads LI. Cysteines 344 and 456 form a disulfide. A Rhodanese domain is found at 404–483; that stretch reads LTEKDIILDI…YQNVKVFNLP (80 aa). Cysteine 456 (cysteine persulfide intermediate) is an active-site residue.

It belongs to the ThiI family.

The protein resides in the cytoplasm. It catalyses the reaction [ThiI sulfur-carrier protein]-S-sulfanyl-L-cysteine + a uridine in tRNA + 2 reduced [2Fe-2S]-[ferredoxin] + ATP + H(+) = [ThiI sulfur-carrier protein]-L-cysteine + a 4-thiouridine in tRNA + 2 oxidized [2Fe-2S]-[ferredoxin] + AMP + diphosphate. It carries out the reaction [ThiS sulfur-carrier protein]-C-terminal Gly-Gly-AMP + S-sulfanyl-L-cysteinyl-[cysteine desulfurase] + AH2 = [ThiS sulfur-carrier protein]-C-terminal-Gly-aminoethanethioate + L-cysteinyl-[cysteine desulfurase] + A + AMP + 2 H(+). It participates in cofactor biosynthesis; thiamine diphosphate biosynthesis. Catalyzes the ATP-dependent transfer of a sulfur to tRNA to produce 4-thiouridine in position 8 of tRNAs, which functions as a near-UV photosensor. Also catalyzes the transfer of sulfur to the sulfur carrier protein ThiS, forming ThiS-thiocarboxylate. This is a step in the synthesis of thiazole, in the thiamine biosynthesis pathway. The sulfur is donated as persulfide by IscS. The protein is tRNA sulfurtransferase of Haemophilus ducreyi (strain 35000HP / ATCC 700724).